We begin with the raw amino-acid sequence, 150 residues long: Photosystem II extrinsic protein V (150 aa).

A signal peptide spans 1–20 (MIRVIMLLVLVWMTPMISWA). The heme c site is built by Cys50, Cys53, His54, and His105.

It belongs to the cytochrome c family. PsbV subfamily. As to quaternary structure, PSII is composed of 1 copy each of membrane proteins PsbA, PsbB, PsbC, PsbD, PsbE, PsbF, PsbH, PsbI, PsbJ, PsbK, PsbL, PsbM, PsbT, PsbY, PsbZ, Psb30/Ycf12, at least 3 peripheral proteins of the oxygen-evolving complex and a large number of cofactors. It forms dimeric complexes. The extrinsic subunits in red algae are PsbO (OEC33), PsbQ', cytochrome c-550 and PsbU. It depends on heme c as a cofactor.

It is found in the plastid. The protein resides in the chloroplast thylakoid membrane. Functionally, one of the extrinsic, lumenal subunits of photosystem II (PSII). PSII is a light-driven water plastoquinone oxidoreductase, using light energy to abstract electrons from H(2)O, generating a proton gradient subsequently used for ATP formation. The extrinsic proteins stabilize the structure of photosystem II oxygen-evolving complex (OEC), the ion environment of oxygen evolution and protect the OEC against heat-induced inactivation. The protein is Photosystem II extrinsic protein V of Cyanidioschyzon merolae (strain NIES-3377 / 10D) (Unicellular red alga).